Reading from the N-terminus, the 277-residue chain is Glycerol-3-phosphate acyltransferase (277 aa).

Transmembrane regions (helical) follow at residues L3–V23, I55–L75, P79–F99, I111–L131, and L155–L175. Residues S207–E277 are disordered. Residues F216–K239 are compositionally biased toward basic and acidic residues. Basic residues-rich tracts occupy residues K240–T253 and K262–K271.

It belongs to the PlsY family. In terms of assembly, probably interacts with PlsX.

The protein resides in the cell inner membrane. The catalysed reaction is an acyl phosphate + sn-glycerol 3-phosphate = a 1-acyl-sn-glycero-3-phosphate + phosphate. The protein operates within lipid metabolism; phospholipid metabolism. Functionally, catalyzes the transfer of an acyl group from acyl-phosphate (acyl-PO(4)) to glycerol-3-phosphate (G3P) to form lysophosphatidic acid (LPA). This enzyme utilizes acyl-phosphate as fatty acyl donor, but not acyl-CoA or acyl-ACP. In Legionella pneumophila subsp. pneumophila (strain Philadelphia 1 / ATCC 33152 / DSM 7513), this protein is Glycerol-3-phosphate acyltransferase.